A 23-amino-acid chain; its full sequence is Nephrotoxin PsTX-115 (23 aa).

It is found in the secreted. The protein localises to the nematocyst. Nephrotoxin. When injected intravenously in rats, causes severe destructive glomerular changes. At 24 hours post-injection partial disruption of the glomerular basement membrane, massive thrombus formation in glomerular capillaries, severe mesangiolysis and infiltrating cells were observed in the majority of glomeruli. This chain is Nephrotoxin PsTX-115, found in Phyllodiscus semoni (Night anemone).